The following is a 92-amino-acid chain: Small ribosomal subunit protein uS15c (92 aa).

The protein belongs to the universal ribosomal protein uS15 family. In terms of assembly, part of the 30S ribosomal subunit.

The protein localises to the plastid. Its subcellular location is the chloroplast. The protein is Small ribosomal subunit protein uS15c (rps15) of Carica papaya (Papaya).